The sequence spans 459 residues: Ribulose bisphosphate carboxylase large chain (459 aa).

Residues 1–2 (MS) constitute a propeptide that is removed on maturation. Pro3 carries the N-acetylproline modification. Residue Lys14 is modified to N6,N6,N6-trimethyllysine. Residues Asn123 and Thr173 each contribute to the substrate site. The active-site Proton acceptor is the Lys175. Lys177 contacts substrate. Lys201, Asp203, and Glu204 together coordinate Mg(2+). N6-carboxylysine is present on Lys201. The active-site Proton acceptor is the His294. Substrate contacts are provided by Arg295, His327, and Ser379.

This sequence belongs to the RuBisCO large chain family. Type I subfamily. As to quaternary structure, heterohexadecamer of 8 large chains and 8 small chains; disulfide-linked. The disulfide link is formed within the large subunit homodimers. The cofactor is Mg(2+). Post-translationally, the disulfide bond which can form in the large chain dimeric partners within the hexadecamer appears to be associated with oxidative stress and protein turnover.

It localises to the plastid. It is found in the chloroplast. The catalysed reaction is 2 (2R)-3-phosphoglycerate + 2 H(+) = D-ribulose 1,5-bisphosphate + CO2 + H2O. The enzyme catalyses D-ribulose 1,5-bisphosphate + O2 = 2-phosphoglycolate + (2R)-3-phosphoglycerate + 2 H(+). In terms of biological role, ruBisCO catalyzes two reactions: the carboxylation of D-ribulose 1,5-bisphosphate, the primary event in carbon dioxide fixation, as well as the oxidative fragmentation of the pentose substrate in the photorespiration process. Both reactions occur simultaneously and in competition at the same active site. The polypeptide is Ribulose bisphosphate carboxylase large chain (Streptopus lanceolatus (Rose twisted stalk)).